Reading from the N-terminus, the 157-residue chain is Small ribosomal subunit protein uS7 (157 aa).

Belongs to the universal ribosomal protein uS7 family. As to quaternary structure, part of the 30S ribosomal subunit. Contacts proteins S9 and S11.

In terms of biological role, one of the primary rRNA binding proteins, it binds directly to 16S rRNA where it nucleates assembly of the head domain of the 30S subunit. Is located at the subunit interface close to the decoding center, probably blocks exit of the E-site tRNA. The polypeptide is Small ribosomal subunit protein uS7 (Chloroflexus aggregans (strain MD-66 / DSM 9485)).